Reading from the N-terminus, the 548-residue chain is mRNA cleavage and polyadenylation factor CLP1 (548 aa).

ATP contacts are provided by residues glutamate 19, lysine 60, and serine 123–threonine 128. The span at glutamate 437–glutamate 481 shows a compositional bias: basic and acidic residues. Residues glutamate 437–glutamate 500 form a disordered region. Acidic residues predominate over residues glutamate 482–glutamate 494.

It belongs to the Clp1 family. Clp1 subfamily. In terms of assembly, component of a pre-mRNA cleavage factor complex. Interacts directly with PCF11.

The protein localises to the nucleus. Its function is as follows. Required for endonucleolytic cleavage during polyadenylation-dependent pre-mRNA 3'-end formation. This is mRNA cleavage and polyadenylation factor CLP1 from Cryptococcus neoformans var. neoformans serotype D (strain B-3501A) (Filobasidiella neoformans).